Reading from the N-terminus, the 656-residue chain is uncharacterized protein (656 aa).

2 disordered regions span residues 1–41 (MMAT…ESEG) and 60–88 (SNKV…HNLE). The segment covering 22-36 (SDSSDSGSDVSFFSV) has biased composition (low complexity). A Phosphoserine modification is found at Ser-39. Residues 62–78 (KVEKDSDSEQRGRKKET) are compositionally biased toward basic and acidic residues.

The protein localises to the cytoplasm. Its subcellular location is the mitochondrion. This is an uncharacterized protein from Saccharomyces cerevisiae (strain ATCC 204508 / S288c) (Baker's yeast).